We begin with the raw amino-acid sequence, 126 residues long: NADP-reducing hydrogenase subunit HndB (126 aa).

As to quaternary structure, heterotetramer composed of HndA, HndB, HndC and HndD subunits. HndA and HndB could form a heterodimeric intermediate in the electron transfer between the active site of hydrogenase subunit HndD and the NADP reduction site of the reducing subunit HndC.

The catalysed reaction is H2 + NADP(+) = NADPH + H(+). Its activity is regulated as follows. Inhibited by oxygen. Catalyzes the reduction of NADP in the presence of molecular H2 to yield NADPH. The chain is NADP-reducing hydrogenase subunit HndB (hndB) from Solidesulfovibrio fructosivorans (Desulfovibrio fructosivorans).